A 94-amino-acid chain; its full sequence is Putative pterin-4-alpha-carbinolamine dehydratase (94 aa).

It belongs to the pterin-4-alpha-carbinolamine dehydratase family.

It carries out the reaction (4aS,6R)-4a-hydroxy-L-erythro-5,6,7,8-tetrahydrobiopterin = (6R)-L-erythro-6,7-dihydrobiopterin + H2O. This Mycobacteroides abscessus (strain ATCC 19977 / DSM 44196 / CCUG 20993 / CIP 104536 / JCM 13569 / NCTC 13031 / TMC 1543 / L948) (Mycobacterium abscessus) protein is Putative pterin-4-alpha-carbinolamine dehydratase.